Here is a 706-residue protein sequence, read N- to C-terminus: Glycogen [starch] synthase (706 aa).

A UDP-binding site is contributed by Arg-26. UDP-alpha-D-glucose is bound by residues His-191 and Arg-197. Alpha-D-glucose 6-phosphate is bound by residues His-277, Glu-278, Gln-280, His-283, and Lys-287. Arg-317 lines the UDP pocket. Arg-317 provides a ligand contact to UDP-alpha-D-glucose. Residue His-491 coordinates alpha-D-glucose 6-phosphate. 3 residues coordinate UDP-alpha-D-glucose: Glu-500, Trp-502, and Gly-503. Thr-505 contacts UDP. 2 residues coordinate alpha-D-glucose 6-phosphate: Arg-572 and Arg-576. Residues 670 to 706 (PEEEDPEEYPFPLTLKQRTGPGSPLDSIQGLQLNGTR) form a disordered region.

This sequence belongs to the glycosyltransferase 3 family. As to quaternary structure, interacts with glucogenin gnn; the interaction is direct.

It catalyses the reaction [(1-&gt;4)-alpha-D-glucosyl](n) + UDP-alpha-D-glucose = [(1-&gt;4)-alpha-D-glucosyl](n+1) + UDP + H(+). It participates in glycan biosynthesis; glycogen biosynthesis. Its activity is regulated as follows. Allosteric activation by glucose-6-phosphate, and phosphorylation by a cAMP-dependent kinase. Glycogen synthase participates in the glycogen biosynthetic process along with glycogenin and glycogen branching enzyme. Extends the primer composed of a few glucose units formed by glycogenin by adding new glucose units to it. In this context, glycogen synthase transfers the glycosyl residue from UDP-Glc to the non-reducing end of alpha-1,4-glucan. This Neurospora crassa (strain ATCC 24698 / 74-OR23-1A / CBS 708.71 / DSM 1257 / FGSC 987) protein is Glycogen [starch] synthase (gsy-1).